The primary structure comprises 318 residues: Aldehyde oxidoreductase FAD-binding subunit PaoB (318 aa).

In terms of domain architecture, FAD-binding PCMH-type spans 1-223 (MKAFTYERVN…VAVTLPPPLG (223 aa)). FAD is bound by residues 26-34 (KFIAGGTNL) and Thr108. [4Fe-4S] cluster contacts are provided by Cys119, Cys129, Cys138, and Cys157. Positions 164, 213, and 230 each coordinate FAD.

Heterotrimer composed of PaoA, PaoB and PaoC. FAD is required as a cofactor. It depends on [4Fe-4S] cluster as a cofactor.

It localises to the periplasm. It carries out the reaction an aldehyde + A + H2O = a carboxylate + AH2 + H(+). Its activity is regulated as follows. The complex requires PaoD for activity. Oxidizes aldehydes to the corresponding carboxylic acids with a preference for aromatic aldehydes. It might play a role in the detoxification of aldehydes to avoid cell damage. The polypeptide is Aldehyde oxidoreductase FAD-binding subunit PaoB (Escherichia coli (strain K12)).